The chain runs to 321 residues: Nitrilase blr3397 (321 aa).

In terms of domain architecture, CN hydrolase spans 10-277; that stretch reads YKAAVVQAAS…ETILYADIAL (268 aa). Catalysis depends on Glu-50, which acts as the Proton acceptor. The active-site Proton donor is Lys-137. Cys-171 functions as the Nucleophile in the catalytic mechanism.

It belongs to the carbon-nitrogen hydrolase superfamily. Nitrilase family. Homodecamer.

The enzyme catalyses an aliphatic nitrile + 2 H2O = a carboxylate + NH4(+). Nitrilase that acts on various kinds of nitrile compounds such as aliphatic and aromatic nitriles. Has higher activity toward aliphatic nitriles compared to aromatic nitriles. Among the different substrates tested, has the highest activity toward hydrocinnamonitrile. In Bradyrhizobium diazoefficiens (strain JCM 10833 / BCRC 13528 / IAM 13628 / NBRC 14792 / USDA 110), this protein is Nitrilase blr3397.